Consider the following 331-residue polypeptide: Oxygen-evolving enhancer protein 1-2, chloroplastic (331 aa).

A chloroplast-targeting transit peptide spans 1–57 (MATSLQAAATFLQPAKIAASPSRNVHLRSNQTVGKSFGLDSSQARLTCSLHSDLKDF). A thylakoid-targeting transit peptide spans 58–84 (AGKCSDAAKIAGFALATSALVVSGAGA).

It belongs to the PsbO family.

It is found in the plastid. Its subcellular location is the chloroplast thylakoid membrane. Stabilizes the manganese cluster which is the primary site of water splitting. Regulates dephosphorylation and turnover of the PSII reaction center D1 protein. This is Oxygen-evolving enhancer protein 1-2, chloroplastic (PSBO2) from Arabidopsis thaliana (Mouse-ear cress).